The sequence spans 205 residues: HTH-type transcriptional regulator PksA (205 aa).

Residues 8–68 (EKRRKQIAEA…FAMKLVQEKV (61 aa)) form the HTH tetR-type domain. A DNA-binding region (H-T-H motif) is located at residues 31 to 50 (SARNIAKEAGLSLGALRHYF).

Functionally, transcriptional regulation of the polyketide synthase operon. This chain is HTH-type transcriptional regulator PksA (pksA), found in Bacillus subtilis (strain 168).